The following is a 363-amino-acid chain: MTPRGPGRLQRLSQCRPQRGSGGPARGLRQLALAAMLGALAVTVSGCSWSEALGIGWPEGITPEAHLNRELWIGAVIASLAVGVIVWGLIFWSAVFHRKKNTDTELPRQFGYNMPLELVLTVIPFLIISVLFYFTVVVQEKMLQIAKDPEVVIDITSFQWNWKFGYQRVNFKDGTLTYDGADPERKRAMVSKPEGKDKYGEELVGPVRGLNTEDRTYLNFDKVETLGTSTEIPVLVLPSGKRIEFQMASADVIHAFWVPEFLFKRDVMPNPVANNSVNVFQIEEITKTGAFVGHCAEMCGTYHSMMNFEVRVVTPNDFKAYLQQRIDGKTNAEALRAINQPPLAVTTHPFDTRRGELAPQPVG.

The tract at residues 1–23 (MTPRGPGRLQRLSQCRPQRGSGG) is disordered. Positions 1–41 (MTPRGPGRLQRLSQCRPQRGSGGPARGLRQLALAAMLGALA) are cleaved as a signal peptide. Helical transmembrane passes span 71-91 (LWIGAVIASLAVGVIVWGLIF) and 118-138 (LVLTVIPFLIISVLFYFTVVV). 4 residues coordinate Cu cation: histidine 254, cysteine 295, cysteine 299, and histidine 303.

This sequence belongs to the cytochrome c oxidase subunit 2 family. Cu cation is required as a cofactor. Heme serves as cofactor.

It is found in the cell membrane. The enzyme catalyses 4 Fe(II)-[cytochrome c] + O2 + 8 H(+)(in) = 4 Fe(III)-[cytochrome c] + 2 H2O + 4 H(+)(out). In terms of biological role, subunits I and II form the functional core of the enzyme complex. Electrons originating in cytochrome c are transferred via heme a and Cu(A) to the binuclear center formed by heme a3 and Cu(B). The polypeptide is Cytochrome c oxidase subunit 2 (ctaC) (Mycobacterium bovis (strain ATCC BAA-935 / AF2122/97)).